A 378-amino-acid polypeptide reads, in one-letter code: Acetylornithine deacetylase (378 aa).

A Zn(2+)-binding site is contributed by His-76. Asp-78 is an active-site residue. Asp-108 contacts Zn(2+). Glu-140 is an active-site residue. Zn(2+) is bound by residues Glu-141, Glu-165, and His-351.

The protein belongs to the peptidase M20A family. ArgE subfamily. As to quaternary structure, homodimer. Zn(2+) serves as cofactor. The cofactor is Co(2+). Glutathione is required as a cofactor.

It localises to the cytoplasm. It carries out the reaction N(2)-acetyl-L-ornithine + H2O = L-ornithine + acetate. It participates in amino-acid biosynthesis; L-arginine biosynthesis; L-ornithine from N(2)-acetyl-L-ornithine (linear): step 1/1. In terms of biological role, catalyzes the hydrolysis of the amide bond of N(2)-acetylated L-amino acids. Cleaves the acetyl group from N-acetyl-L-ornithine to form L-ornithine, an intermediate in L-arginine biosynthesis pathway, and a branchpoint in the synthesis of polyamines. This chain is Acetylornithine deacetylase, found in Aliivibrio fischeri (strain ATCC 700601 / ES114) (Vibrio fischeri).